Consider the following 707-residue polypeptide: Tubulin polyglutamylase ttll-11 (707 aa).

The region spanning 124–488 (RFTIDTSRAK…PLVRDTLLLV (365 aa)) is the TTL domain. Residues 279–282 (QEYV), K293, and D295 contribute to the ATP site. The interval 675 to 707 (RNRSGTNGRKQNFTDDNNNPNSFAHLPKINERL) is disordered. Residues 677 to 696 (RSGTNGRKQNFTDDNNNPNS) show a composition bias toward polar residues.

It belongs to the tubulin--tyrosine ligase family. As to expression, expressed in amphid sensory neurons. Weakly expressed in body wall muscles. Isoform a: Specifically expressed in ciliated sensory neurons in the head, including the IL1s, OLQ, head CEP, and amphid neurons. In the male tail, expressed in HOA, RnA, and phasmid neurons. Isoform b: Specifically expressed in male and hermaphrodite IL2 ciliated sensory neurons, and in male-specific CEM, HOB and RnB ciliated sensory neurons.

Its subcellular location is the cell projection. It is found in the axon. The protein localises to the perikaryon. The protein resides in the dendrite. It localises to the cilium. Its subcellular location is the extracellular vesicle. It catalyses the reaction L-glutamyl-[protein] + L-glutamate + ATP = gamma-L-glutamyl-L-glutamyl-[protein] + ADP + phosphate + H(+). Its function is as follows. Polyglutamylase which preferentially modifies tubulin. Involved in the side-chain initiation step of the polyglutamylation reaction. By controlling tubulin glutamylation, regulates ciliary specialization and motor-based transport. Promotes the formation of A and B tubule singlets by splaying microtubule doublets in cilia. Together with ttll-4 and 5, required for male mating. In terms of biological role, specifically promotes tubulin glutamylation in a subset of ciliated neurons including amphid, phasmid, CEP and RnA neurons. Specifically promotes tubulin glutamylation in male ciliated CEM, HOB and RnB neurons that release bioactive extracellular vesicles. Regulates the localization of TRP channel pdk-2 in male CEM, HOB and RnB neurons. Regulates the environmental release of bioactive extracellular vesicles in cilia. The protein is Tubulin polyglutamylase ttll-11 of Caenorhabditis elegans.